The sequence spans 454 residues: Phosphoglucosamine mutase (454 aa).

Ser-104 serves as the catalytic Phosphoserine intermediate. Mg(2+) is bound by residues Ser-104, Asp-244, Asp-246, and Asp-248. Ser-104 carries the phosphoserine modification.

Belongs to the phosphohexose mutase family. Mg(2+) is required as a cofactor. Activated by phosphorylation.

It catalyses the reaction alpha-D-glucosamine 1-phosphate = D-glucosamine 6-phosphate. Catalyzes the conversion of glucosamine-6-phosphate to glucosamine-1-phosphate. The protein is Phosphoglucosamine mutase of Lacticaseibacillus paracasei (strain ATCC 334 / BCRC 17002 / CCUG 31169 / CIP 107868 / KCTC 3260 / NRRL B-441) (Lactobacillus paracasei).